A 444-amino-acid chain; its full sequence is Tubulin beta-2 chain (444 aa).

GTP is bound by residues Gln-11, Glu-69, Ser-138, Gly-142, Thr-143, Gly-144, Asn-204, and Asn-226. Residue Glu-69 coordinates Mg(2+). The interval 422–444 is disordered; it reads YQQYQDATAEEDDYDDGEGSTGD. Residues 429-444 show a composition bias toward acidic residues; that stretch reads TAEEDDYDDGEGSTGD.

The protein belongs to the tubulin family. Dimer of alpha and beta chains. A typical microtubule is a hollow water-filled tube with an outer diameter of 25 nm and an inner diameter of 15 nM. Alpha-beta heterodimers associate head-to-tail to form protofilaments running lengthwise along the microtubule wall with the beta-tubulin subunit facing the microtubule plus end conferring a structural polarity. Microtubules usually have 13 protofilaments but different protofilament numbers can be found in some organisms and specialized cells. Requires Mg(2+) as cofactor. Found in areas of rapidly dividing tissues.

The protein localises to the cytoplasm. The protein resides in the cytoskeleton. Its function is as follows. Tubulin is the major constituent of microtubules, a cylinder consisting of laterally associated linear protofilaments composed of alpha- and beta-tubulin heterodimers. Microtubules grow by the addition of GTP-tubulin dimers to the microtubule end, where a stabilizing cap forms. Below the cap, tubulin dimers are in GDP-bound state, owing to GTPase activity of alpha-tubulin. In Daucus carota (Wild carrot), this protein is Tubulin beta-2 chain (TUBB2).